The primary structure comprises 195 residues: Imidazoleglycerol-phosphate dehydratase (195 aa).

It belongs to the imidazoleglycerol-phosphate dehydratase family.

The protein localises to the cytoplasm. The enzyme catalyses D-erythro-1-(imidazol-4-yl)glycerol 3-phosphate = 3-(imidazol-4-yl)-2-oxopropyl phosphate + H2O. It functions in the pathway amino-acid biosynthesis; L-histidine biosynthesis; L-histidine from 5-phospho-alpha-D-ribose 1-diphosphate: step 6/9. This chain is Imidazoleglycerol-phosphate dehydratase, found in Burkholderia pseudomallei (strain 1710b).